Consider the following 80-residue polypeptide: Large ribosomal subunit protein bL31B (80 aa).

Belongs to the bacterial ribosomal protein bL31 family. Type B subfamily. In terms of assembly, part of the 50S ribosomal subunit.

This Methylobacillus flagellatus (strain ATCC 51484 / DSM 6875 / VKM B-1610 / KT) protein is Large ribosomal subunit protein bL31B.